Reading from the N-terminus, the 223-residue chain is Pyridoxine/pyridoxamine 5'-phosphate oxidase (223 aa).

Substrate is bound by residues 9–12 (RVGY) and K76. Residues 71 to 76 (RTVLCK), 86 to 87 (FT), K93, and Q115 contribute to the FMN site. The substrate site is built by Y133, R137, and S141. FMN contacts are provided by residues 150–151 (QS) and W196. 202–204 (RMH) provides a ligand contact to substrate. R206 is an FMN binding site.

Belongs to the pyridoxamine 5'-phosphate oxidase family. Homodimer. Requires FMN as cofactor.

It catalyses the reaction pyridoxamine 5'-phosphate + O2 + H2O = pyridoxal 5'-phosphate + H2O2 + NH4(+). It carries out the reaction pyridoxine 5'-phosphate + O2 = pyridoxal 5'-phosphate + H2O2. Its pathway is cofactor metabolism; pyridoxal 5'-phosphate salvage; pyridoxal 5'-phosphate from pyridoxamine 5'-phosphate: step 1/1. It participates in cofactor metabolism; pyridoxal 5'-phosphate salvage; pyridoxal 5'-phosphate from pyridoxine 5'-phosphate: step 1/1. Catalyzes the oxidation of either pyridoxine 5'-phosphate (PNP) or pyridoxamine 5'-phosphate (PMP) into pyridoxal 5'-phosphate (PLP). The sequence is that of Pyridoxine/pyridoxamine 5'-phosphate oxidase from Rhodococcus jostii (strain RHA1).